The primary structure comprises 292 residues: Elongation factor Ts (292 aa).

The interval 80–83 (TDFV) is involved in Mg(2+) ion dislocation from EF-Tu.

Belongs to the EF-Ts family.

The protein localises to the cytoplasm. In terms of biological role, associates with the EF-Tu.GDP complex and induces the exchange of GDP to GTP. It remains bound to the aminoacyl-tRNA.EF-Tu.GTP complex up to the GTP hydrolysis stage on the ribosome. The protein is Elongation factor Ts of Ralstonia nicotianae (strain ATCC BAA-1114 / GMI1000) (Ralstonia solanacearum).